Consider the following 228-residue polypeptide: 2,3-bisphosphoglycerate-dependent phosphoglycerate mutase (228 aa).

Substrate contacts are provided by residues 7 to 14, 20 to 21, Arg-59, 86 to 89, Lys-97, 113 to 114, and 182 to 183; these read RHGESAWN, TG, ERHY, RR, and GN. Catalysis depends on His-8, which acts as the Tele-phosphohistidine intermediate. Glu-86 (proton donor/acceptor) is an active-site residue.

The protein belongs to the phosphoglycerate mutase family. BPG-dependent PGAM subfamily.

It catalyses the reaction (2R)-2-phosphoglycerate = (2R)-3-phosphoglycerate. The protein operates within carbohydrate degradation; glycolysis; pyruvate from D-glyceraldehyde 3-phosphate: step 3/5. Functionally, catalyzes the interconversion of 2-phosphoglycerate and 3-phosphoglycerate. In Fusobacterium nucleatum subsp. nucleatum (strain ATCC 25586 / DSM 15643 / BCRC 10681 / CIP 101130 / JCM 8532 / KCTC 2640 / LMG 13131 / VPI 4355), this protein is 2,3-bisphosphoglycerate-dependent phosphoglycerate mutase.